Consider the following 289-residue polypeptide: Release factor glutamine methyltransferase (289 aa).

S-adenosyl-L-methionine-binding positions include 122 to 126 (GVGSG), aspartate 145, tryptophan 174, and asparagine 189. Position 189–192 (189–192 (NPPY)) interacts with substrate.

Belongs to the protein N5-glutamine methyltransferase family. PrmC subfamily.

It catalyses the reaction L-glutaminyl-[peptide chain release factor] + S-adenosyl-L-methionine = N(5)-methyl-L-glutaminyl-[peptide chain release factor] + S-adenosyl-L-homocysteine + H(+). Methylates the class 1 translation termination release factors RF1/PrfA and RF2/PrfB on the glutamine residue of the universally conserved GGQ motif. In Caulobacter vibrioides (strain ATCC 19089 / CIP 103742 / CB 15) (Caulobacter crescentus), this protein is Release factor glutamine methyltransferase.